Consider the following 2035-residue polypeptide: Envoplakin (2035 aa).

Residues 1-27 (MFKGLSKGSQGKGSPKGSPAKGSPKGS) are compositionally biased toward low complexity. 2 disordered regions span residues 1–37 (MFKG…AATQ) and 63–84 (KLQQ…QETG). The interval 1 to 841 (MFKGLSKGSQ…LEPALAVSAP (841 aa)) is globular 1. A 4 X 4 AA tandem repeats of K-G-S-P region spans residues 12–28 (KGSPKGSPAKGSPKGSP). Residues 71 to 84 (GEQNQALQHQQETG) show a composition bias toward polar residues. One copy of the Spectrin repeat lies at 229–330 (YTHLQGCTKQ…LCICQESQLQ (102 aa)). Residues 400 to 419 (QEVAPLPQRRNPSKQPLHVD) are disordered. The SH3 domain occupies 413 to 470 (KQPLHVDSICDWDSGEVQLLRGERYTLKDNADPYTWLVQGPGGETKSAPAACLCIPAP). The stretch at 842–1664 (KRLRVISLQE…EKERTLRDLH (823 aa)) forms a coiled coil. Positions 842–1674 (KRLRVISLQE…TKVSREELNQ (833 aa)) are central fibrous rod domain. One copy of the Plectin 1 repeat lies at 1186–1227 (KQKPKVQLQERVSEIFQVLPETEQEIRRLRAQLQETGSKKSG). S1576 bears the Phosphoserine mark. Over residues 1607–1631 (KQQKARQLQEEGRLLSQKTESERQK) the composition is skewed to basic and acidic residues. Residues 1607-1637 (KQQKARQLQEEGRLLSQKTESERQKAAQRSQ) are disordered. Residues 1675–2035 (ETQTRETNLS…SPTLPRSCVR (361 aa)) are globular 2. The Plectin 2 repeat unit spans residues 1679–1714 (RETNLSTKICILEPETGNDMSPYEAYKRGVIDRGQY). S1800 carries the phosphoserine modification. Plectin repeat units follow at residues 1819 to 1856 (FGLT…PITG), 1857 to 1894 (QKLL…NTST), 1895 to 1932 (QRLL…QESV), 1933 to 1970 (LPHL…EDLG), and 1971 to 2008 (QLLQ…PLSG). The residue at position 2026 (S2026) is a Phosphoserine.

The protein belongs to the plakin or cytolinker family. May form a homodimer or a heterodimer with PPL.

The protein localises to the cell junction. It localises to the desmosome. Its subcellular location is the cornified envelope. The protein resides in the cytoplasm. It is found in the cytoskeleton. In terms of biological role, component of the cornified envelope of keratinocytes. May link the cornified envelope to desmosomes and intermediate filaments. This is Envoplakin (Evpl) from Mus musculus (Mouse).